We begin with the raw amino-acid sequence, 699 residues long: Catalase-peroxidase (699 aa).

Residues 72-200 (WHSAGTYRIA…LAAVMMGLIY (129 aa)) constitute a cross-link (tryptophyl-tyrosyl-methioninium (Trp-Tyr) (with M-226)). Catalysis depends on histidine 73, which acts as the Proton acceptor. Positions 200 to 226 (YVNPEGVDGNPDPLKTAKDMRVTFARM) form a cross-link, tryptophyl-tyrosyl-methioninium (Tyr-Met) (with W-72). Histidine 241 lines the heme b pocket.

Belongs to the peroxidase family. Peroxidase/catalase subfamily. As to quaternary structure, homodimer or homotetramer. Heme b serves as cofactor. In terms of processing, formation of the three residue Trp-Tyr-Met cross-link is important for the catalase, but not the peroxidase activity of the enzyme.

It carries out the reaction H2O2 + AH2 = A + 2 H2O. The enzyme catalyses 2 H2O2 = O2 + 2 H2O. Its function is as follows. Bifunctional enzyme with both catalase and broad-spectrum peroxidase activity. The sequence is that of Catalase-peroxidase from Aeromonas salmonicida (strain A449).